The primary structure comprises 551 residues: Cation/acetate symporter ActP (551 aa).

Transmembrane regions (helical) follow at residues 5 to 25, 34 to 54, 77 to 97, 104 to 124, 150 to 170, 184 to 204, 207 to 227, 263 to 283, 304 to 324, 356 to 376, 406 to 426, 430 to 450, 469 to 489, and 498 to 518; these read HWSA…ALTG, IQAI…TYWA, GLAI…SALV, GLIY…LIAE, LSAC…MVGA, VAVV…GMLA, WVQI…AIMV, ISAL…PHIL, GFIG…ILLV, FFLG…VAGL, VSKI…ILFE, IAFM…PIII, LGLS…VTIL, and YEYP…FFSI.

It belongs to the sodium:solute symporter (SSF) (TC 2.A.21) family.

Its subcellular location is the cell inner membrane. Transports acetate. The polypeptide is Cation/acetate symporter ActP (Yersinia pestis bv. Antiqua (strain Antiqua)).